A 270-amino-acid chain; its full sequence is Phosphoserine phosphatase (270 aa).

The active-site Nucleophile is aspartate 67. Aspartate 67 and aspartate 69 together coordinate Mg(2+). Aspartate 69 serves as the catalytic Proton donor. Residues glutamate 76, arginine 112, 156-157 (SG), and lysine 205 each bind substrate. Aspartate 227 is a Mg(2+) binding site.

This sequence belongs to the HAD-like hydrolase superfamily. SerB family. The cofactor is Mg(2+).

The catalysed reaction is O-phospho-L-serine + H2O = L-serine + phosphate. The enzyme catalyses O-phospho-D-serine + H2O = D-serine + phosphate. It participates in amino-acid biosynthesis; L-serine biosynthesis; L-serine from 3-phospho-D-glycerate: step 3/3. Functionally, catalyzes the last step in the biosynthesis of serine from carbohydrates. The reaction mechanism proceeds via the formation of a phosphoryl-enzyme intermediates. This Drosophila melanogaster (Fruit fly) protein is Phosphoserine phosphatase (aay).